The primary structure comprises 266 residues: Regulatory protein RecX (266 aa).

This sequence belongs to the RecX family.

The protein resides in the cytoplasm. Its function is as follows. Modulates RecA activity. This chain is Regulatory protein RecX, found in Levilactobacillus brevis (strain ATCC 367 / BCRC 12310 / CIP 105137 / JCM 1170 / LMG 11437 / NCIMB 947 / NCTC 947) (Lactobacillus brevis).